Consider the following 1077-residue polypeptide: Teashirt homolog 1-B (1077 aa).

Disordered stretches follow at residues 1–110 (MPRR…NASY) and 142–179 (NEKA…SCTN). The span at 26–36 (TEEDNLEDDGL) shows a compositional bias: acidic residues. The span at 56-69 (TQSYQNSPISSATN) shows a compositional bias: polar residues. A compositionally biased stretch (low complexity) spans 160–179 (SGPTSDPGTPTTITSSSCTN). The C2H2-type 1 zinc-finger motif lies at 248–272 (FRCKDCSAAYDTLVELTVHMNETGH). Over residues 274-286 (RDDNRDREAERTK) the composition is skewed to basic and acidic residues. Residues 274 to 300 (RDDNRDREAERTKRWSKPRKRSLMEME) are disordered. A C2H2-type 2 zinc finger spans residues 309–333 (LKCMYCGHSFESLQDLSVHMIKTKH). Residues 362-394 (ALPDSPEQAGISPGASVSESAKDPKAANPYVTP) form a disordered region. Residues 418–442 (LKCMECGSSHDTLQQLTAHMMVTGH) form a C2H2-type 3 zinc finger. 2 disordered regions span residues 473–530 (PPTT…KIEP) and 849–873 (GRLT…SSFE). Residues 497 to 529 (HSEEKKDPEKEKVNIGEVEKKIKEENEDPEKIE) show a composition bias toward basic and acidic residues. A compositionally biased stretch (polar residues) spans 853–862 (PKSSTPSTVS). The homeobox DNA-binding region spans 885 to 955 (RKGRQSNWNP…NVKYQLRRTG (71 aa)). 2 C2H2-type zinc fingers span residues 970–992 (FFCN…LETH) and 1037–1060 (FQCK…SKTH).

This sequence belongs to the teashirt C2H2-type zinc-finger protein family.

Its subcellular location is the nucleus. In terms of biological role, probable transcriptional regulator involved in developmental processes. May act as a transcriptional repressor (Potential). Involved in two major neuronal regionalization processes: primary anteroposterior (AP) axis patterning of the CNS and segmentation of the cranial neuronal crest (CNS) development. This Xenopus laevis (African clawed frog) protein is Teashirt homolog 1-B (tshz1-b).